The following is a 71-amino-acid chain: Large ribosomal subunit protein bL31 (71 aa).

Zn(2+)-binding residues include Cys16, Cys18, Cys38, and Cys41.

The protein belongs to the bacterial ribosomal protein bL31 family. Type A subfamily. As to quaternary structure, part of the 50S ribosomal subunit. Requires Zn(2+) as cofactor.

Its function is as follows. Binds the 23S rRNA. The polypeptide is Large ribosomal subunit protein bL31 (Laribacter hongkongensis (strain HLHK9)).